The following is a 363-amino-acid chain: MSHNTFGHLFRVTTWGESHGPSIGAVVDGCPAGIPLTETDLQPFLDLRRPGTSRHVTPRQEPDQVRILSGTFEDDRTDGPVTTGAPISLMIENTDQRSKDYSAIRDKWRPGHADYTYDMKYGIRDYRGGGRSSARETAMRVAAGGIARKVLGDGISIRAALVQVGDRAIDRSRWDWDEVSNNPFFCPDATTAALWEADMDALRRAGSSTGAIVEVVVSGVPVGWGAPVYAKLDSELAAAMMTINAVKGVEIGAGFGSAAMRGEDAADEMRMGEDGPVFLSNHNGGVLGGISTGQDLVVRFAVKPTSSITVERNTLDRNFEETVIETRGRHDPCVGIRAVPVGEAMAALVLADQKLRHAGQSAY.

The NADP(+) site is built by R48 and R54. FMN is bound by residues R131–S133, N244–A245, G288, K303–S307, and R329.

The protein belongs to the chorismate synthase family. As to quaternary structure, homotetramer. It depends on FMNH2 as a cofactor.

It catalyses the reaction 5-O-(1-carboxyvinyl)-3-phosphoshikimate = chorismate + phosphate. Its pathway is metabolic intermediate biosynthesis; chorismate biosynthesis; chorismate from D-erythrose 4-phosphate and phosphoenolpyruvate: step 7/7. In terms of biological role, catalyzes the anti-1,4-elimination of the C-3 phosphate and the C-6 proR hydrogen from 5-enolpyruvylshikimate-3-phosphate (EPSP) to yield chorismate, which is the branch point compound that serves as the starting substrate for the three terminal pathways of aromatic amino acid biosynthesis. This reaction introduces a second double bond into the aromatic ring system. The polypeptide is Chorismate synthase (Maricaulis maris (strain MCS10) (Caulobacter maris)).